The primary structure comprises 84 residues: Cell division topological specificity factor (84 aa).

It belongs to the MinE family.

Functionally, prevents the cell division inhibition by proteins MinC and MinD at internal division sites while permitting inhibition at polar sites. This ensures cell division at the proper site by restricting the formation of a division septum at the midpoint of the long axis of the cell. The protein is Cell division topological specificity factor of Pseudomonas syringae pv. syringae (strain B728a).